The primary structure comprises 692 residues: Polyribonucleotide nucleotidyltransferase (692 aa).

D484 and D490 together coordinate Mg(2+). Residues 551 to 610 (PRIITIQINPDRIRDVIGPGGKVIRALTEETGATIDIQDNGTVTIASVDGEAGAAAKRRI) enclose the KH domain. One can recognise an S1 motif domain in the interval 620–688 (DTIYDGKVAK…RQGKIKLSMK (69 aa)).

It belongs to the polyribonucleotide nucleotidyltransferase family. As to quaternary structure, component of the RNA degradosome, which is a multiprotein complex involved in RNA processing and mRNA degradation. The cofactor is Mg(2+).

The protein localises to the cytoplasm. The catalysed reaction is RNA(n+1) + phosphate = RNA(n) + a ribonucleoside 5'-diphosphate. In terms of biological role, involved in mRNA degradation. Catalyzes the phosphorolysis of single-stranded polyribonucleotides processively in the 3'- to 5'-direction. The protein is Polyribonucleotide nucleotidyltransferase of Acidithiobacillus ferrooxidans (strain ATCC 53993 / BNL-5-31) (Leptospirillum ferrooxidans (ATCC 53993)).